The chain runs to 372 residues: DNA-directed RNA polymerase subunit alpha (372 aa).

The tract at residues 1 to 268 (MIFDEDSNSI…DQFQPFINFD (268 aa)) is alpha N-terminal domain (alpha-NTD). Positions 280–372 (KDTLPYDSNL…ESLSKQYSEE (93 aa)) are alpha C-terminal domain (alpha-CTD).

Belongs to the RNA polymerase alpha chain family. As to quaternary structure, homodimer. The RNAP catalytic core consists of 2 alpha, 1 beta, 1 beta' and 1 omega subunit. When a sigma factor is associated with the core the holoenzyme is formed, which can initiate transcription.

It catalyses the reaction RNA(n) + a ribonucleoside 5'-triphosphate = RNA(n+1) + diphosphate. Functionally, DNA-dependent RNA polymerase catalyzes the transcription of DNA into RNA using the four ribonucleoside triphosphates as substrates. The polypeptide is DNA-directed RNA polymerase subunit alpha (Ehrlichia chaffeensis (strain ATCC CRL-10679 / Arkansas)).